A 172-amino-acid chain; its full sequence is Diphosphoinositol polyphosphate phosphohydrolase 1 (172 aa).

N-acetylmethionine is present on Met-1. Substrate is bound by residues Arg-10, 18–20 (KKR), and 39–41 (SSR). A Nudix hydrolase domain is found at 17–144 (YKKRAACLCF…VQASYFETLR (128 aa)). The Mg(2+) site is built by Gly-50 and Glu-66. Residues 51–72 (GGMEPEEEPGTAAVREVCEEAG) carry the Nudix box motif. Glu-69 (proton acceptor) is an active-site residue. A Mg(2+)-binding site is contributed by Glu-70. Substrate contacts are provided by residues 89–91 (RKH), Arg-115, and Lys-133.

It belongs to the Nudix hydrolase family. DIPP subfamily. Monomer. The cofactor is Mg(2+). Mn(2+) serves as cofactor. Requires Zn(2+) as cofactor.

It is found in the cytoplasm. It localises to the nucleus. It carries out the reaction diphospho-myo-inositol polyphosphate + H2O = myo-inositol polyphosphate + phosphate.. The catalysed reaction is 5-diphospho-1D-myo-inositol 1,2,3,4,6-pentakisphosphate + H2O = 1D-myo-inositol hexakisphosphate + phosphate + H(+). It catalyses the reaction 3,5-bis(diphospho)-1D-myo-inositol 1,2,4,6-tetrakisphosphate + H2O = 3-diphospho-1D-myo-inositol 1,2,4,5,6-pentakisphosphate + phosphate + 2 H(+). The enzyme catalyses [phosphate](n+1) + n H2O = (n+1) phosphate + n H(+). It carries out the reaction P(1),P(5)-bis(5'-adenosyl) pentaphosphate + H2O = ADP + ATP + 2 H(+). The catalysed reaction is P(1),P(6)-bis(5'-adenosyl) hexaphosphate + H2O = 2 ATP + 2 H(+). It catalyses the reaction P(1),P(4)-bis(5'-adenosyl) tetraphosphate + H2O = AMP + ATP + 2 H(+). The enzyme catalyses a 5'-end (N(7)-methyl 5'-triphosphoguanosine)-ribonucleoside in mRNA + H2O = N(7)-methyl-GMP + a 5'-end diphospho-ribonucleoside in mRNA + 2 H(+). It carries out the reaction a 5'-end (N(7)-methyl 5'-triphosphoguanosine)-ribonucleoside in mRNA + H2O = N(7)-methyl-GDP + a 5'-end phospho-ribonucleoside in mRNA + 2 H(+). Its function is as follows. Cleaves a beta-phosphate from the diphosphate groups in PP-InsP5 (diphosphoinositol pentakisphosphate) and [PP]2-InsP4 (bisdiphosphoinositol tetrakisphosphate), suggesting that it may play a role in signal transduction. InsP6 (inositol hexakisphosphate) is not a substrate. Also able to catalyze the hydrolysis of dinucleoside oligophosphates, with diadenosine 5',5'''-P1,P6-hexaphosphate (Ap6A) and diadenosine 5',5'''- P1,P5-pentaphosphate (Ap5A) being the preferred substrates. The major reaction products are ADP and p4a from Ap6A and ADP and ATP from Ap5A. Also able to hydrolyze 5- phosphoribose 1-diphosphate. Acts as a decapping enzyme that can hydrolyze both monomethylated and unmethylated capped RNAs. Hydrolyzes monomethylated capped RNA after both the alpha- and beta-phosphates generating m7GMP + ppRNA and m7GDP + pRNA. Modulates the stability of a subset of mRNAs implicated in cell motility. Divalent cations zinc, magnesium and manganese determine its substrate specificity. Exhibits diphosphoinositol polyphosphate phosphohydrolase in the presence of magnesium ions, diadenosine hexaphosphate hydrolase activity in the presence of manganese ions and endopolyphosphatase activity in the presence of zinc ions. Plays an important role in limiting DNA damage and maintaining cell survival upon oxidative stress via its endopolyphosphatase activity. This chain is Diphosphoinositol polyphosphate phosphohydrolase 1, found in Bos taurus (Bovine).